The following is a 355-amino-acid chain: NAD-dependent protein deacylase sirtuin-6 (355 aa).

Ser-2 carries the post-translational modification N-acetylserine. At Ser-10 the chain carries Phosphoserine; by MAPK8. Residues 27-272 (PEELERKVWE…TRLMKHLGLE (246 aa)) enclose the Deacetylase sirtuin-type domain. Lys-33 bears the N6-acetyllysine mark. NAD(+) contacts are provided by Ala-53, Thr-57, Phe-64, Arg-65, Trp-71, Gln-113, and His-133. The Proton acceptor role is filled by His-133. Residues Cys-141, Cys-144, and Cys-166 each coordinate Zn(2+). Residue Lys-170 forms a Glycyl lysine isopeptide (Lys-Gly) (interchain with G-Cter in ubiquitin) linkage. Zn(2+) is bound at residue Cys-177. NAD(+)-binding residues include Gly-214, Ser-216, Asn-240, Gln-242, and Val-258. The segment at 284-355 (RALPPLPRPP…KRVKAKAVPS (72 aa)) is disordered. Pro residues predominate over residues 287-296 (PPLPRPPTPK). Position 294 is a phosphothreonine (Thr-294). Phosphoserine occurs at positions 303 and 330. The segment covering 343-355 (RPPKRVKAKAVPS) has biased composition (basic residues).

The protein belongs to the sirtuin family. Class IV subfamily. In terms of assembly, homodimer; binds to nucleosomes and DNA ends as a homodimer. Interacts with RELA; interferes with RELA binding to target DNA. Interacts with SMARCA5; promoting recruitment of SMARCA5/SNF2H to double-strand breaks (DSBs) sites. Interacts with the mTORC2 complex; preventing the ability of SIRT6 to deacetylate FOXO1. Interacts with the CLOCK-BMAL1 complex; recruited by the CLOCK-BMAL1 complex to regulate expression of clock-controlled genes. Interacts with CSNK2A2; preventing CSNK2A2 localization to the nucleus. (Microbial infection) Interacts with Kaposi's sarcoma-associated herpesvirus protein VIRF-1; this interaction prevents SIRT6 deubiquitination by USP10. Zn(2+) is required as a cofactor. In terms of processing, acetylated at Lys-33. Deacetylation at Lys-33 by SIRT1 promotes homomultimerization and binding to double-strand breaks (DSBs) sites. Post-translationally, phosphorylation at Ser-10 by MAPK8/JNK1 in response to oxidative stress stimulates the mono-ADP-ribosyltransferase activity on PARP1, leading to PARP1 recruitment to double-strand breaks (DSBs). Monoubiquitinated at Lys-170 by STUB1/CHIP, preventing its degradation by the proteasome. Deubiquitinated by USP10, also preventing its degradation by the proteasome. In terms of processing, sumoylated, leading to specifically decrease ability to deacetylate histone H3 at 'Lys-56' (H3K56ac).

Its subcellular location is the nucleus. It is found in the chromosome. The protein resides in the telomere. The protein localises to the endoplasmic reticulum. It catalyses the reaction N(6)-acetyl-L-lysyl-[protein] + NAD(+) + H2O = 2''-O-acetyl-ADP-D-ribose + nicotinamide + L-lysyl-[protein]. The enzyme catalyses N(6)-tetradecanoyl-L-lysyl-[protein] + NAD(+) + H2O = 2''-O-tetradecanoyl-ADP-D-ribose + nicotinamide + L-lysyl-[protein]. The catalysed reaction is N(6)-hexadecanoyl-L-lysyl-[protein] + NAD(+) + H2O = 2''-O-hexadecanoyl-ADP-D-ribose + nicotinamide + L-lysyl-[protein]. It carries out the reaction L-lysyl-[protein] + NAD(+) = N(6)-(ADP-D-ribosyl)-L-lysyl-[protein] + nicotinamide + H(+). It catalyses the reaction L-arginyl-[protein] + NAD(+) = N(omega)-(ADP-D-ribosyl)-L-arginyl-[protein] + nicotinamide + H(+). With respect to regulation, compared to the defatty-acylase activity, the protein deacetylase activity is weak in vitro, and requires activation. The histone deacetylase activity is strongly activated upon binding to nucleosomes and chromatin in vivo. Two molecules of SIRT6 associate with the acidic patch of one nucleosome, while the C-terminal disordered region of SIRT6 associates with nucleosomal DNA, leading to efficient histone deacetylation. The protein-lysine deacetylase activity is also activated by long-chain free fatty-acids. The histone deacetylase activity is specifically repressed by long non-coding RNA lncPRESS1, which binds to SIRT6 and prevents chromatin-binding, thereby promoting stem cell pluripotency. Due to its essential role as tumor suppressor and involvement in DNA repair and life span, extensive research is made for the identification of small compound regulators of SIRT6. Nitro-fatty acids (nitro-oleic acid and nitro-conjugated linoleic acid) strongly stimulate the protein-lysine deacetylase activity by forming a covalent Michael adduct formation with Cys-18. Activated by UBCS039 (4-(pyridin-3-yl)-4,5- dihydropyrrolo[1,2-a]quinoxaline). Inhibited by non-selective hydroxamate trichostatin A inhibitor. Deacetylase activity is activated by fluvastatin and quercetin-based compounds. The protein-lysine deacetylase activity, but not the defatty-acylase activity, is specifically activated by MDL-800 and MDL-801 activators in vivo, enhancing the histone deacetylase and tumor suppressor activities. MDL-800 and MDL-801 selectively activate SIRT6 and not other members of the sirtuin family. The binding-mode of MDL-801 is however subject to discussion. Its function is as follows. NAD-dependent protein deacetylase, deacylase and mono-ADP-ribosyltransferase that plays an essential role in DNA damage repair, telomere maintenance, metabolic homeostasis, inflammation, tumorigenesis and aging. Displays protein-lysine deacetylase or defatty-acylase (demyristoylase and depalmitoylase) activity, depending on the context. Acts as a key histone deacetylase by catalyzing deacetylation of histone H3 at 'Lys-9', 'Lys-18' and 'Lys-56' (H3K9ac, H3K18ac and H3K56ac, respectively), suppressing target gene expression of several transcription factors, including NF-kappa-B. Acts as an inhibitor of transcription elongation by mediating deacetylation of H3K9ac and H3K56ac, preventing release of NELFE from chromatin and causing transcriptional pausing. Involved in DNA repair by promoting double-strand break (DSB) repair: acts as a DSB sensor by recognizing and binding DSB sites, leading to (1) recruitment of DNA repair proteins, such as SMARCA5/SNF2H, and (2) deacetylation of histone H3K9ac and H3K56ac. SIRT6 participation to DSB repair is probably involved in extension of life span. Also promotes DNA repair by deacetylating non-histone proteins, such as DDB2 and p53/TP53. Specifically deacetylates H3K18ac at pericentric heterochromatin, thereby maintaining pericentric heterochromatin silencing at centromeres and protecting against genomic instability and cellular senescence. Involved in telomere maintenance by catalyzing deacetylation of histone H3 in telomeric chromatin, regulating telomere position effect and telomere movement in response to DNA damage. Required for embryonic stem cell differentiation by mediating histone deacetylation of H3K9ac. Plays a major role in metabolism by regulating processes such as glycolysis, gluconeogenesis, insulin secretion and lipid metabolism. Inhibits glycolysis via histone deacetylase activity and by acting as a corepressor of the transcription factor HIF1A, thereby controlling the expression of multiple glycolytic genes. Has tumor suppressor activity by repressing glycolysis, thereby inhibiting the Warburg effect. Also regulates glycolysis and tumorigenesis by mediating deacetylation and nuclear export of non-histone proteins, such as isoform M2 of PKM (PKM2). Acts as a negative regulator of gluconeogenesis by mediating deacetylation of non-histone proteins, such as FOXO1 and KAT2A/GCN5. Promotes beta-oxidation of fatty acids during fasting by catalyzing deacetylation of NCOA2, inducing coactivation of PPARA. Acts as a regulator of lipid catabolism in brown adipocytes, both by catalyzing deacetylation of histones and non-histone proteins, such as FOXO1. Also acts as a regulator of circadian rhythms, both by regulating expression of clock-controlled genes involved in lipid and carbohydrate metabolism, and by catalyzing deacetylation of PER2. The defatty-acylase activity is specifically involved in regulation of protein secretion. Has high activity toward long-chain fatty acyl groups and mediates protein-lysine demyristoylation and depalmitoylation of target proteins, such as RRAS2 and TNF, thereby regulating their secretion. Also acts as a mono-ADP-ribosyltransferase by mediating mono-ADP-ribosylation of PARP1, TRIM28/KAP1 or SMARCC2/BAF170. Mono-ADP-ribosyltransferase activity is involved in DNA repair, cellular senescence, repression of LINE-1 retrotransposon elements and regulation of transcription. This Homo sapiens (Human) protein is NAD-dependent protein deacylase sirtuin-6.